The primary structure comprises 307 residues: HTH-type transcriptional regulator DmlR (307 aa).

One can recognise an HTH lysR-type domain in the interval 5–62 (PLLNDLRVFMLVARRAGFAAVAEELGVSPAFVSKRIALLEQTLNVVLLHRTTRRVTIT). Positions 22–41 (FAAVAEELGVSPAFVSKRIA) form a DNA-binding region, H-T-H motif.

It belongs to the LysR transcriptional regulatory family.

Functionally, transcriptional regulator required for the aerobic growth on D-malate as the sole carbon source. Induces the expression of dmlA in response to D-malate or L- or meso-tartrate. Negatively regulates its own expression. This is HTH-type transcriptional regulator DmlR (dmlR) from Escherichia coli (strain K12).